Consider the following 328-residue polypeptide: Malate dehydrogenase (328 aa).

12–18 contributes to the NAD(+) binding site; the sequence is GAAGQIA. 2 residues coordinate substrate: Arg93 and Arg99. NAD(+)-binding positions include Asn106, Gln113, and 130–132; that span reads VGN. Substrate contacts are provided by Asn132 and Arg163. Residue His188 is the Proton acceptor of the active site.

It belongs to the LDH/MDH superfamily. MDH type 2 family.

It carries out the reaction (S)-malate + NAD(+) = oxaloacetate + NADH + H(+). Functionally, catalyzes the reversible oxidation of malate to oxaloacetate. This is Malate dehydrogenase from Burkholderia cenocepacia (strain HI2424).